Consider the following 178-residue polypeptide: uncharacterized protein (178 aa).

This is an uncharacterized protein from Saccharolobus islandicus (Sulfolobus islandicus).